The chain runs to 354 residues: Protein OVEREXPRESSOR OF CATIONIC PEROXIDASE 3 (354 aa).

The Nuclear localization signal 1 motif lies at 63 to 70 (NRKGFVSS). 2 disordered regions span residues 65 to 98 (KGFV…EDPF) and 151 to 186 (TGDV…PTKL). Over residues 154–181 (VDVDVDNDDDDNDDDDNDDDDDDSEEDE) the composition is skewed to acidic residues. The short motif at 191–198 (LKRLAYAL) is the Nuclear localization signal 2 element. A disordered region spans residues 243–264 (KPPVAAPENSSPDPSPVESLSA). Residues 286–345 (RWSAQKRVKKAHIETLEKVYRRSKRPTNAVVSSIVQVTNLPRKRVLKWFEDKRAEDGVPD) constitute a DNA-binding region (homeobox). The Nuclear localization signal 3 signature appears at 293 to 300 (VKKAHIET).

It localises to the nucleus. Functionally, may modulate chromatin structure by regulation of nucleosome assembly/disassembly. Homeodomain transcription factor that mediates jasmonic acid (JA)-mediated COI1-dependent and abscisic acid (ABA)-mediated PMR4-dependent resistance to infection by necrotrophic fungal pathogens (e.g. B.cinerea and P.cucumerina) and bacterial pathogens (e.g. P.syringae DC3000); this resistance involves at least callose deposition. Required for the P.fluorescens WCS417r-triggered JA-dependent induced systemic resistance (ISR) against both P.syringae DC3000 and H.arabidopsidis. Negative regulator of the ABA-dependent drought resistance. In Arabidopsis thaliana (Mouse-ear cress), this protein is Protein OVEREXPRESSOR OF CATIONIC PEROXIDASE 3.